A 39-amino-acid polypeptide reads, in one-letter code: MTQQSNPNEQTVELNRTILYWGLLLIFVLAVLFSNYFFN.

Residues 18–38 (ILYWGLLLIFVLAVLFSNYFF) form a helical membrane-spanning segment.

Belongs to the PsbL family. In terms of assembly, PSII is composed of 1 copy each of membrane proteins PsbA, PsbB, PsbC, PsbD, PsbE, PsbF, PsbH, PsbI, PsbJ, PsbK, PsbL, PsbM, PsbT, PsbX, PsbY, PsbZ, Psb30/Ycf12, at least 3 peripheral proteins of the oxygen-evolving complex and a large number of cofactors. It forms dimeric complexes.

Its subcellular location is the plastid membrane. In terms of biological role, one of the components of the core complex of photosystem II (PSII). PSII is a light-driven water:plastoquinone oxidoreductase that uses light energy to abstract electrons from H(2)O, generating O(2) and a proton gradient subsequently used for ATP formation. It consists of a core antenna complex that captures photons, and an electron transfer chain that converts photonic excitation into a charge separation. This subunit is found at the monomer-monomer interface and is required for correct PSII assembly and/or dimerization. In Cuscuta pentagona (Five-angled dodder), this protein is Photosystem II reaction center protein L.